The sequence spans 640 residues: Threonine--tRNA ligase (640 aa).

Residues 1–61 (MPTITLPDGS…ERDASLQIIT (61 aa)) enclose the TGS domain. A catalytic region spans residues 242 to 533 (DHRRIGKQLD…LIEHYAGAFP (292 aa)). Zn(2+)-binding residues include Cys-333, His-384, and His-510.

This sequence belongs to the class-II aminoacyl-tRNA synthetase family. In terms of assembly, homodimer. The cofactor is Zn(2+).

It is found in the cytoplasm. The enzyme catalyses tRNA(Thr) + L-threonine + ATP = L-threonyl-tRNA(Thr) + AMP + diphosphate + H(+). Catalyzes the attachment of threonine to tRNA(Thr) in a two-step reaction: L-threonine is first activated by ATP to form Thr-AMP and then transferred to the acceptor end of tRNA(Thr). Also edits incorrectly charged L-seryl-tRNA(Thr). The protein is Threonine--tRNA ligase of Stutzerimonas stutzeri (strain A1501) (Pseudomonas stutzeri).